The following is a 147-amino-acid chain: Spermidine export protein MdtJ (147 aa).

The next 4 helical transmembrane spans lie at 1–21 (MIYW…TLSM), 31–51 (TGHI…SLAV), 54–74 (VALG…ITIF), and 81–101 (ETLS…ILLV). Residues 105–147 (TRKPKQPNCHRGNRPPSVQELKTQTTGHHKGVAVESGEHHAAA) form a disordered region.

This sequence belongs to the drug/metabolite transporter (DMT) superfamily. Small multidrug resistance (SMR) (TC 2.A.7.1) family. MdtJ subfamily. Forms a complex with MdtI.

The protein resides in the cell inner membrane. Its function is as follows. Catalyzes the excretion of spermidine. The chain is Spermidine export protein MdtJ from Yersinia pestis bv. Antiqua (strain Antiqua).